A 462-amino-acid polypeptide reads, in one-letter code: Nitrogenase iron-iron protein beta chain (462 aa).

Cysteine 20, cysteine 45, cysteine 104, and serine 143 together coordinate [8Fe-7S] cluster.

It belongs to the NifD/NifK/NifE/NifN family. In terms of assembly, hexamer of two alpha, two beta, and two delta chains. The cofactor is [8Fe-7S] cluster.

The enzyme catalyses N2 + 8 reduced [2Fe-2S]-[ferredoxin] + 16 ATP + 16 H2O = H2 + 8 oxidized [2Fe-2S]-[ferredoxin] + 2 NH4(+) + 16 ADP + 16 phosphate + 6 H(+). Its function is as follows. This iron-iron protein is part of the nitrogenase complex that catalyzes the key enzymatic reactions in nitrogen fixation. Other nitrogenase complexes utilize a molybdenum-iron protein or a vanadium-iron protein. The polypeptide is Nitrogenase iron-iron protein beta chain (anfK) (Azotobacter vinelandii).